Consider the following 521-residue polypeptide: Chromaffin granule amine transporter (521 aa).

The Cytoplasmic portion of the chain corresponds to 1-21 (MLQVVLGAPQRLLKEGRQSRK). A helical membrane pass occupies residues 22–42 (LVLVVVFVALLLDNMLLTVVV). Residues 43 to 135 (PIVPTFLYAT…IEFLEEENVR (93 aa)) lie on the Lumenal, vesicle side of the membrane. N-linked (GlcNAc...) asparagine glycosylation is found at N58, N87, and N104. A helical membrane pass occupies residues 136 to 155 (IGILFASKALMQLLVNPFVG). The Cytoplasmic portion of the chain corresponds to 156-164 (PLTNRIGYH). A helical membrane pass occupies residues 165 to 185 (IPMFVGFMIMFLSTLMFAFSG). The Lumenal, vesicle segment spans residues 186–194 (TYALLFVAR). The chain crosses the membrane as a helical span at residues 195–215 (TLQGIGSSFSSVAGLGMLASV). The Cytoplasmic portion of the chain corresponds to 216–224 (YTDNYERGR). The chain crosses the membrane as a helical span at residues 225–247 (AMGIALGGLALGLLVGAPFGSVM). Residues 248–253 (YEFVGK) are Lumenal, vesicle-facing. The chain crosses the membrane as a helical span at residues 254–276 (SSPFLILAFLALLDGALQLCILW). Residues 277–296 (PSKVSPESAMGTSLLTLLKD) are Cytoplasmic-facing. Residues 297–316 (PYILVAAGSICLANMGVAIL) form a helical membrane-spanning segment. Topologically, residues 317-332 (EPTLPIWMMQTMCSPE) are lumenal, vesicle. The chain crosses the membrane as a helical span at residues 333–357 (WQLGLAFLPASVAYLIGTNLFGVLA). The Cytoplasmic portion of the chain corresponds to 358–362 (NKMGR). A helical transmembrane segment spans residues 363–383 (WLCSLVGMVAVGISLLCVPLA). Residues 384-394 (HNIFGLIGPNA) are Lumenal, vesicle-facing. The helical transmembrane segment at 395–415 (GLGFAIGMVDSSLMPIMGYLV) threads the bilayer. Residues 416–419 (DLRH) are Cytoplasmic-facing. The chain crosses the membrane as a helical span at residues 420 to 440 (TSVYGSVYAIADVAFCVGFAI). At 441 to 445 (GPSTG) the chain is on the lumenal, vesicle side. A helical membrane pass occupies residues 446 to 467 (GVIVQVIGFPWLMVIIGTINII). Topologically, residues 468 to 521 (YAPLCCFLQNPPAKEEKRAILSQECPTETQMYTFQKPTKAFPLGENSDDPSSGE) are cytoplasmic.

It belongs to the major facilitator superfamily. Vesicular transporter family. In terms of tissue distribution, adrenal gland.

It is found in the cytoplasmic vesicle. The protein resides in the secretory vesicle membrane. Its subcellular location is the secretory vesicle. It localises to the synaptic vesicle membrane. It carries out the reaction serotonin(in) + 2 H(+)(out) = serotonin(out) + 2 H(+)(in). The enzyme catalyses (R)-noradrenaline(in) + 2 H(+)(out) = (R)-noradrenaline(out) + 2 H(+)(in). It catalyses the reaction dopamine(in) + 2 H(+)(out) = dopamine(out) + 2 H(+)(in). Its activity is regulated as follows. Strongly inhibited by reserpine, ketanserin and methamphetamine. Also inhibited weakly by tetrabenazine. In terms of biological role, electrogenic antiporter that exchanges one cationic monoamine with two intravesicular protons across the membrane of secretory and synaptic vesicles. Uses the electrochemical proton gradient established by the V-type proton-pump ATPase to accumulate high concentrations of monoamines inside the vesicles prior to their release via exocytosis. Transports catecholamines and indolamines with higher affinity for serotonin. Regulates the transvesicular monoaminergic gradient that determines the quantal size. Mediates presynaptic monoaminergic vesicle transport in the amygdala and prefrontal brain regions related with emotion processing in response to environmental stimuli. The protein is Chromaffin granule amine transporter (Slc18a1) of Rattus norvegicus (Rat).